The chain runs to 310 residues: D-alanyl-D-alanine endopeptidase (310 aa).

The N-terminal stretch at 1 to 25 (MPKFRVSLFSLALMLAVPFAPQAVA) is a signal peptide. S67 acts as the Acyl-ester intermediate in catalysis. The active-site Proton acceptor is the K70. The active site involves S124. K231 is a binding site for substrate.

This sequence belongs to the peptidase S11 family. In terms of processing, pbp8 is a proteolytic product of Pbp7.

It is found in the periplasm. Cell wall formation. May play a specialized role in remodeling the cell wall. Specifically hydrolyzes the DD-diaminopimelate-alanine bonds in high-molecular-mass murein sacculi. This chain is D-alanyl-D-alanine endopeptidase (pbpG), found in Escherichia coli (strain K12).